The chain runs to 150 residues: Ribonuclease H (150 aa).

Residues 1–141 (MRPVIIHTDG…ADQLARDGLT (141 aa)) form the RNase H type-1 domain. 4 residues coordinate Mg(2+): Asp9, Glu47, Asp69, and Asp133.

It belongs to the RNase H family. In terms of assembly, monomer. Mg(2+) is required as a cofactor.

Its subcellular location is the cytoplasm. It carries out the reaction Endonucleolytic cleavage to 5'-phosphomonoester.. Functionally, endonuclease that specifically degrades the RNA of RNA-DNA hybrids. The sequence is that of Ribonuclease H from Rhodopseudomonas palustris (strain BisB5).